The chain runs to 3033 residues: Genome polyprotein (3033 aa).

Ser-2 is subject to N-acetylserine; by host. The tract at residues 2–23 is interaction with STAT1; that stretch reads STNPKPQRKTKRNTNRRPQDVK. The tract at residues 2-58 is interaction with EIF2AK2/PKR; the sequence is STNPKPQRKTKRNTNRRPQDVKFPGGGQIVGGVYLLPRRGPRLGVRATRKTSERSQP. The interaction with DDX3X stretch occupies residues 2–59; that stretch reads STNPKPQRKTKRNTNRRPQDVKFPGGGQIVGGVYLLPRRGPRLGVRATRKTSERSQPR. The interval 2-75 is disordered; sequence STNPKPQRKT…PKDRRSTGKS (74 aa). Residues 2-168 lie on the Cytoplasmic side of the membrane; it reads STNPKPQRKT…EDGVNFATGN (167 aa). 2 short sequence motifs (nuclear localization signal) span residues 5–13 and 38–43; these read PKPQRKTKR and PRRGPR. Basic residues predominate over residues 7 to 16; it reads PQRKTKRNTN. Positions 32 to 47 are enriched in low complexity; that stretch reads GGVYLLPRRGPRLGVR. A Phosphoserine; by host modification is found at Ser-53. 2 short sequence motifs (nuclear localization signal) span residues 58-64 and 66-71; these read PRGRRQP and PKDRRS. Ser-99 is subject to Phosphoserine; by host. The segment at 112–152 is important for endoplasmic reticulum and mitochondrial localization; it reads PRHRSRNVGKVIDTLTCGFADLMGYIPVVGAPLGGVARALA. Ser-116 is subject to Phosphoserine; by host PKA. The segment at 122 to 173 is interaction with APOA2; it reads VIDTLTCGFADLMGYIPVVGAPLGGVARALAHGVRVLEDGVNFATGNLPGCS. An important for lipid droplets localization region spans residues 164-167; that stretch reads FATG. A helical transmembrane segment spans residues 169-189; it reads LPGCSFSIFLLALLSCITTPV. Positions 178-191 are cleaved as a propeptide — ER anchor for the core protein, removed in mature form by host signal peptidase; it reads LLALLSCITTPVSA. Topologically, residues 190-358 are lumenal; sequence SAAEVKNIST…GGAHWGVMFG (169 aa). N-linked (GlcNAc...) asparagine; by host glycans are attached at residues Asn-196, Asn-209, and Asn-234. The tract at residues 265 to 296 is important for fusion; sequence VVMSATLCSALYVGDLCGGVMLAAQMFIVSPQ. N-linked (GlcNAc...) asparagine; by host glycosylation occurs at Asn-305. The helical transmembrane segment at 359–379 threads the bilayer; that stretch reads LAYFSMQGAWAKVVVILLLAA. The Lumenal portion of the chain corresponds to 380–729; sequence GVDAQTHTVG…WEWVVLLFLL (350 aa). The HVR1 stretch occupies residues 385 to 411; the sequence is THTVGGSTAHNARTLTGMFSLGARQKI. N-linked (GlcNAc...) (high mannose) asparagine; by host glycans are attached at residues Asn-417, Asn-423, Asn-430, and Asn-448. Disulfide bonds link Cys-429–Cys-554, Cys-452–Cys-459, Cys-488–Cys-496, and Cys-505–Cys-510. The N-linked (GlcNAc...) (high mannose) asparagine; by host glycan is linked to Asn-477. Residues 484–496 form a CD81-binding 1 region; the sequence is MRPYCWHYPPRQC. The CD81-binding 2 stretch occupies residues 524–555; sequence LGAPTYTWGENETDVFLLNSTRPPQGSWFGCT. Asn-534, Asn-542, and Asn-558 each carry an N-linked (GlcNAc...) (high mannose) asparagine; by host glycan. Cys-566 and Cys-571 are disulfide-bonded. Residue Asn-578 is glycosylated (N-linked (GlcNAc...) (high mannose) asparagine; by host). 3 disulfides stabilise this stretch: Cys-585–Cys-589, Cys-601–Cys-624, and Cys-611–Cys-648. N-linked (GlcNAc...) (high mannose) asparagine; by host glycans are attached at residues Asn-627 and Asn-649. A disulfide bridge links Cys-656 with Cys-681. Residues 664–675 are EIF2AK2/eIF2-alpha phosphorylation homology domain (PePHD); it reads SQLSPLLHSTTE. Residues 730–750 form a helical membrane-spanning segment; the sequence is LADARVCACLWMLILLGQAEA. Residues 751–761 lie on the Lumenal side of the membrane; it reads ALEKLVVLHAA. Residues 762 to 782 form a helical membrane-spanning segment; that stretch reads SAASCNGFLYFVIFFVAAWYI. Topologically, residues 783-786 are cytoplasmic; it reads KGRV. Residues 787–807 traverse the membrane as a helical segment; sequence VPLATYSLTGLWSFGLLLLAL. Over 808-817 the chain is Lumenal; sequence PQQAYAYDAS. A helical transmembrane segment spans residues 818–838; that stretch reads VHGQIGAALLVLITLFTLTPG. The Cytoplasmic portion of the chain corresponds to 839-885; the sequence is YKTLLSRFLWWLCYLLTLAEAMVQEWAPPMQVRGGRDGIIWAVAIFC. A helical membrane pass occupies residues 886-906; sequence PGVVFDITKWLLAVLGPAYLL. Topologically, residues 907-932 are lumenal; it reads KGALTRVPYFVRAHALLRMCTMVRHL. Residues 907 to 1030 form the Peptidase C18 domain; the sequence is KGALTRVPYF…GYTSKGWSLL (124 aa). The segment at 908 to 1210 is protease NS2-3; the sequence is GALTRVPYFV…PVETLDIVTR (303 aa). Cys-926 carries the S-palmitoyl cysteine; by host lipid modification. A helical membrane pass occupies residues 933–953; the sequence is AGGRYVQMVLLALGRWTGTYI. The tract at residues 933-953 is interaction with host SCPS1; the sequence is AGGRYVQMVLLALGRWTGTYI. At 954 to 1661 the chain is on the cytoplasmic side; it reads YDHLTPMSDW…CMQADLEVMT (708 aa). Catalysis depends on for protease NS2 activity; shared with dimeric partner residues His-956, Glu-976, and Cys-997. The Peptidase S29 domain occupies 1031–1212; it reads APITAYAQQT…ETLDIVTRSP (182 aa). Catalysis depends on charge relay system; for serine protease NS3 activity residues His-1087 and Asp-1111. The Zn(2+) site is built by Cys-1127 and Cys-1129. Ser-1169 functions as the Charge relay system; for serine protease NS3 activity in the catalytic mechanism. Zn(2+) contacts are provided by Cys-1175 and His-1179. The 153-residue stretch at 1221–1373 folds into the Helicase ATP-binding domain; that stretch reads PAVPQTYQVG…PNIEEVALGQ (153 aa). ATP is bound at residue 1234-1241; sequence APTGSGKS. 2 residues coordinate Mg(2+): Ser-1241 and Glu-1321. The DECH box motif lies at 1320 to 1323; the sequence is DECH. Residues 1490–1501 form an RNA-binding region; the sequence is QRRGRTGRGRLG. The helical transmembrane segment at 1662 to 1682 threads the bilayer; the sequence is STWVLAGGVLAAVAAYCLATG. Residues 1683–1694 form an NS3-binding region; sequence CVCIIGRLHVNQ. Residues 1683 to 1809 are Cytoplasmic-facing; sequence CVCIIGRLHV…ALTSPLSTST (127 aa). The helical transmembrane segment at 1810–1830 threads the bilayer; that stretch reads TILLNILGGWLASQIAPPAGA. The Lumenal segment spans residues 1831–1832; the sequence is TG. The chain crosses the membrane as a helical span at residues 1833–1853; it reads FVVSGLVGAAVGSIGLGKVLV. The segment at 1837-1865 is glycine zipper; it reads GLVGAAVGSIGLGKVLVDILAGYGAGISG. A topological domain (cytoplasmic) is located at residue Asp-1854. The chain crosses the membrane as a helical span at residues 1855–1875; the sequence is ILAGYGAGISGALVAFKIMSG. Topologically, residues 1876-1885 are lumenal; the sequence is EKPSMEDVVN. A helical transmembrane segment spans residues 1886 to 1906; it reads LLPGILSPGALVVGVICAAIL. Residues 1907 to 1976 are Cytoplasmic-facing; it reads RRHVGPGEGA…WITEDCPIPC (70 aa). Residue Cys-1972 is the site of S-palmitoyl cysteine; by host attachment. Cys-1976 is lipidated: S-palmitoyl cysteine; by host; partial. The stretch at 1977-2007 is an intramembrane region; that stretch reads SGSWLRDVWDWVCTILTDFKNWLTSKLFPKM. Residues 1982 to 2002 are membrane-binding; sequence RDVWDWVCTILTDFKNWLTSK. The Cytoplasmic segment spans residues 2008 to 3012; the sequence is PGLPFISCQK…YHSVSRARPR (1005 aa). Residues 2009–2225 are RNA-binding; the sequence is GLPFISCQKG…RATCTTHGKA (217 aa). Positions 2015, 2033, 2035, and 2056 each coordinate Zn(2+). Tyr-2069 bears the Phosphotyrosine; by host mark. The FKBP8-binding stretch occupies residues 2124–2212; that stretch reads EFFSWVDGVQ…ASSSASQLSA (89 aa). The tract at residues 2124–2332 is transcriptional activation; it reads EFFSWVDGVQ…PTPPPRRRRT (209 aa). An interaction with non-structural protein 4A region spans residues 2139–2143; that stretch reads PIPKP. 2 disordered regions span residues 2193–2214 and 2309–2335; these read RLAR…SAPS and ATVA…TVGL. Phosphoserine; by host; in p56 is present on Ser-2198. A compositionally biased stretch (low complexity) spans 2198 to 2214; that stretch reads SPPSEASSSASQLSAPS. The residue at position 2201 (Ser-2201) is a Phosphoserine; by host; in p58. Ser-2205 carries the post-translational modification Phosphoserine; by host; in p56 and p58, regulates intracellular NS5A distribution. A phosphoserine; by host; in p58 mark is found at Ser-2208, Ser-2211, and Ser-2214. The interval 2210 to 2249 is ISDR; that stretch reads LSAPSLRATCTTHGKAYDVDMVDANLFMGGDVTRIESESK. The tract at residues 2214-2275 is interaction with EIF2AK2/PKR; sequence SLRATCTTHG…LEPSIPSEYM (62 aa). Residues 2253–2310 form an NS4B-binding region; it reads LDSLDPMVEERSDLEPSIPSEYMLPKKRFPPALPAWARPDYNPPLVESWKRPDYQPAT. Residues 2316–2326 show a composition bias toward pro residues; it reads LPPPKKTPTPP. The short motif at 2322–2325 is the SH3-binding element; that stretch reads TPTP. Thr-2324 is subject to Phosphothreonine; by host. A Nuclear localization signal motif is present at residues 2326-2334; it reads PPRRRRTVG. An interaction with host IFI27 region spans residues 2336–2447; the sequence is SESSIADALQ…SVVCCSMSYS (112 aa). Residue Lys-2350 forms a Glycyl lysine isopeptide (Lys-Gly) (interchain with G-Cter in ubiquitin) linkage. Residues 2351–2431 form a disordered region; it reads SFGQPPPSGD…PGSGSGSWST (81 aa). A V3 region spans residues 2358 to 2381; the sequence is SGDSGLSTGADAADSGSRTPPDEL. Residues 2398 to 2408 show a composition bias toward acidic residues; sequence EPGDPDLEPEQ. The segment covering 2417–2431 has biased composition (low complexity); it reads GGVVTPGSGSGSWST. A RdRp catalytic domain is found at 2656–2774; that stretch reads PMGFSYDTRC…ISESQGTEED (119 aa). Positions 2662, 2760, and 2761 each coordinate Mg(2+). Residues 3013–3033 form a helical membrane-spanning segment; sequence LLLLGLLLLFVGVGLFLLPAR.

This sequence belongs to the hepacivirus polyprotein family. In terms of assembly, homooligomer. Interacts with E1 (via C-terminus). Interacts with the non-structural protein 5A. Interacts (via N-terminus) with host STAT1 (via SH2 domain); this interaction results in decreased STAT1 phosphorylation and ubiquitin-mediated proteasome-dependent STAT1 degradation, leading to decreased IFN-stimulated gene transcription. Interacts with host STAT3; this interaction constitutively activates STAT3. Interacts with host LTBR receptor. Interacts with host TNFRSF1A receptor and possibly induces apoptosis. Interacts with host HNRPK. Interacts with host YWHAE. Interacts with host UBE3A/E6AP. Interacts with host DDX3X. Interacts with host APOA2. Interacts with host RXRA protein. Interacts with host SP110 isoform 3/Sp110b; this interaction sequesters the transcriptional corepressor SP110 away from the nucleus. Interacts with host CREB3 nuclear transcription protein; this interaction triggers cell transformation. Interacts with host ACY3. Interacts with host C1QR1. Interacts with host RBM24; this interaction, which enhances the interaction of the mature core protein with 5'-UTR, may inhibit viral translation and favor replication. Interacts with host EIF2AK2/PKR; this interaction induces the autophosphorylation of EIF2AK2. Part of the viral assembly initiation complex composed of NS2, E1, E2, NS3, NS4A, NS5A and the mature core protein. As to quaternary structure, forms a heterodimer with envelope glycoprotein E2. Interacts with mature core protein. Interacts with protease NS2. The heterodimer E1/E2 interacts with host CLDN1; this interaction plays a role in viral entry into host cell. Interacts with host SPSB2 (via C-terminus). Part of the viral assembly initiation complex composed of NS2, E1, E2, NS3, NS4A, NS5A and the mature core protein. Interacts with host NEURL3; this interaction prevents E1 binding to glycoprotein E2. Forms a heterodimer with envelope glycoprotein E1. Interacts with host CD81 and SCARB1 receptors; this interaction may play a role in viral entry into host cell. Interacts with host EIF2AK2/PKR; this interaction inhibits EIF2AK2 and probably allows the virus to evade the innate immune response. Interacts with host CD209/DC-SIGN and CLEC4M/DC-SIGNR. Interact with host SPCS1; this interaction is essential for viral particle assembly. Interacts with protease NS2. The heterodimer E1/E2 interacts with host CLDN1; this interaction plays a role in viral entry into host cell. Part of the viral assembly initiation complex composed of NS2, E1, E2, NS3, NS4A, NS5A and the mature core protein. Interacts with host SLC3A2/4F2hc; the interaction may facilitate viral entry into host cell. Interacts with human PLSCR1. In terms of assembly, homohexamer. Homoheptamer. Interacts with protease NS2. As to quaternary structure, homodimer. Interacts with host SPCS1; this interaction is essential for viral particle assembly. Interacts with envelope glycoprotein E1. Interacts with envelope glycoprotein E2. Interacts with viroporin p7. Interacts with serine protease/helicase NS3. Part of the replication complex composed of NS2, NS3, NS4A, NS4B, NS5A and the RNA-directed RNA polymerase embedded in an ER-derived membranous web. Part of the viral assembly initiation complex composed of NS2, E1, E2, NS3, NS4A, NS5A and the mature core protein. Interacts with protease NS2. Interacts with non-structural protein 4A; this interaction stabilizes the folding of NS3 serine protease. NS3-NS4A interaction is essential for NS3 activation and allows membrane anchorage of the latter. NS3/NS4A complex also prevents phosphorylation of host IRF3, thus preventing the establishment of dsRNA induced antiviral state. Interacts with host MAVS; this interaction leads to the cleavage and inhibition of host MAVS. Interacts with host TICAM1; this interaction leads to the cleavage and inhibition of host TICAM1. Interacts with host TANK-binding kinase/TBK1; this interaction results in the inhibition of the association between TBK1 and IRF3, which leads to the inhibition of IRF3 activation. Interacts with host RBM24. Part of the replication complex composed of NS2, NS3, NS4A, NS4B, NS5A and the RNA-directed RNA polymerase embedded in an ER-derived membranous web. Part of the viral assembly initiation complex composed of NS2, E1, E2, NS3, NS4A, NS5A and the mature core protein. In terms of assembly, interacts with NS3 serine protease; this interaction stabilizes the folding of NS3 serine protease. NS3-NS4A interaction is essential for NS3 activation and allows membrane anchorage of the latter. Interacts with non-structural protein 5A (via N-terminus). Part of the replication complex composed of NS2, NS3, NS4A, NS4B, NS5A and the RNA-directed RNA polymerase embedded in an ER-derived membranous web. Part of the viral assembly initiation complex composed of NS2, E1, E2, NS3, NS4A, NS5A and the mature core protein. As to quaternary structure, homomultimer. Interacts with non-structural protein NS5A. Interacts with host PLA2G4C; this interaction likely initiates the recruitment of replication complexes to lipid droplets. Interacts with host STING; this interaction disrupts the interaction between STING and TBK1 thereby suppressing the interferon signaling. Part of the replication complex composed of NS2, NS3, NS4A, NS4B, NS5A and the RNA-directed RNA polymerase embedded in an ER-derived membranous web. Monomer. Homodimer; dimerization is required for RNA-binding. Interacts with the mature core protein. Interacts (via N-terminus) with non-structural protein 4A. Interacts with non-structural protein 4B. Interacts (via region D2) with RNA-directed RNA polymerase. Part of the viral assembly initiation complex composed of NS2, E1, E2, NS3, NS4A, NS5A and the mature core protein. Part of the replication complex composed of NS2, NS3, NS4A, NS4B, NS5A and the RNA-directed RNA polymerase embedded in an ER-derived membranous web. Interacts with host GRB2. Interacts with host BIN1. Interacts with host PIK3R1. Interacts with host SRCAP. Interacts with host FKBP8. Interacts (via C-terminus) with host VAPB (via MSP domain). Interacts with host EIF2AK2/PKR; this interaction leads to disruption of EIF2AK2 dimerization by NS5A and probably allows the virus to evade the innate immune response. Interacts (via N-terminus) with host PACSIN2 (via N-terminus); this interaction attenuates protein kinase C alpha-mediated phosphorylation of PACSIN2 by disrupting the interaction between PACSIN2 and PRKCA. Interacts (via N-terminus) with host SRC kinase (via SH2 domain). Interacts with most Src-family kinases. Interacts with host IFI27 and SKP2; promotes the ubiquitin-mediated proteasomal degradation of NS5A. Interacts with host GPS2. Interacts with host TNFRSF21; this interaction allows the modulation by the virus of JNK, p38 MAPK, STAT3, and Akt signaling pathways in a DR6-dependent manner. Interacts (via N-terminus) with host CIDEB (via N-terminus); this interaction seems to regulate the association of HCV particles with APOE. Interacts with host CHKA/Choline Kinase-alpha; CHKA bridges host PI4KA and NS5A and potentiates NS5A-stimulated PI4KA activity, which then facilitates the targeting of the ternary complex to the ER for viral replication. Interacts with host SPSB2 (via C-terminus); this interaction targets NS5A for ubiquitination and degradation. Interacts with host RAB18; this interaction may promote the association of NS5A and other replicase components with lipid droplets. Interacts (via region D2) with host PPIA/CYPA; the interaction stimulates RNA-binding ability of NS5A and is dependent on the peptidyl-prolyl cis-trans isomerase activity of PPIA/CYPA. Interacts with host TRIM14; this interaction induces the degradation of NS5A. In terms of assembly, homooligomer. Interacts with non-structural protein 5A. Interacts with host VAPB. Interacts with host PRK2/PKN2. Interacts with host HNRNPA1 and SEPT6; these interactions facilitate viral replication. Part of the replication complex composed of NS2, NS3, NS4A, NS4B, NS5A and the RNA-directed RNA polymerase. Zn(2+) serves as cofactor. Requires Mg(2+) as cofactor. In terms of processing, specific enzymatic cleavages in vivo yield mature proteins. The structural proteins, core, E1, E2 and p7 are produced by proteolytic processing by host signal peptidases. The core protein precursor is synthesized as a 23 kDa, which is retained in the ER membrane through the hydrophobic signal peptide. Cleavage by the signal peptidase releases the 21 kDa mature core protein. The cleavage of the core protein precursor occurs between aminoacids 176 and 188 but the exact cleavage site is not known. Some degraded forms of the core protein appear as well during the course of infection. The other proteins (p7, NS2, NS3, NS4A, NS4B, NS5A and NS5B) are cleaved by the viral proteases. Autoprocessing between NS2 and NS3 is mediated by the NS2 cysteine protease catalytic domain and regulated by the NS3 N-terminal domain. Phosphorylated by host PKC and PKA. Post-translationally, ubiquitinated; mediated by UBE3A and leading to core protein subsequent proteasomal degradation. In terms of processing, highly N-glycosylated. Palmitoylation is required for NS2/3 autoprocessing and E2 recruitment to membranes. Post-translationally, palmitoylated. This modification may play a role in its polymerization or in protein-protein interactions. In terms of processing, phosphorylated on serines in a basal form termed p56. p58 is a hyperphosphorylated form of p56. p56 and p58 coexist in the cell in roughly equivalent amounts. Hyperphosphorylation is dependent on the presence of NS4A. Host CSNK1A1/CKI-alpha or RPS6KB1 kinases may be responsible for NS5A phosphorylation. Tyrosine phosphorylation is essential for the interaction with host SRC. Post-translationally, the N-terminus is phosphorylated by host PRK2/PKN2.

Its subcellular location is the host endoplasmic reticulum membrane. It is found in the host mitochondrion membrane. The protein localises to the virion. It localises to the host cytoplasm. The protein resides in the host nucleus. Its subcellular location is the host lipid droplet. It is found in the virion membrane. The protein localises to the host mitochondrion. It localises to the host cell membrane. The protein resides in the host perinuclear region. It catalyses the reaction Hydrolysis of four peptide bonds in the viral precursor polyprotein, commonly with Asp or Glu in the P6 position, Cys or Thr in P1 and Ser or Ala in P1'.. The catalysed reaction is a ribonucleoside 5'-triphosphate + H2O = a ribonucleoside 5'-diphosphate + phosphate + H(+). It carries out the reaction ATP + H2O = ADP + phosphate + H(+). The enzyme catalyses RNA(n) + a ribonucleoside 5'-triphosphate = RNA(n+1) + diphosphate. With respect to regulation, inhibited by the antiviral drug hexamethylene amiloride. Inhibition by amantadine appears to be genotype-dependent. Also inhibited by long-alkyl-chain iminosugar derivatives. Activity is up-regulated by PRK2/PKN2-mediated phosphorylation. Its function is as follows. Packages viral RNA to form a viral nucleocapsid, and promotes virion budding. Participates in the viral particle production as a result of its interaction with the non-structural protein 5A. Binds RNA and may function as a RNA chaperone to induce the RNA structural rearrangements taking place during virus replication. Modulates viral translation initiation by interacting with viral IRES and 40S ribosomal subunit. Affects various cell signaling pathways, host immunity and lipid metabolism. Prevents the establishment of cellular antiviral state by blocking the interferon-alpha/beta (IFN-alpha/beta) and IFN-gamma signaling pathways and by blocking the formation of phosphorylated STAT1 and promoting ubiquitin-mediated proteasome-dependent degradation of STAT1. Activates STAT3 leading to cellular transformation. Regulates the activity of cellular genes, including c-myc and c-fos. May repress the promoter of p53, and sequester CREB3 and SP110 isoform 3/Sp110b in the cytoplasm. Represses cell cycle negative regulating factor CDKN1A, thereby interrupting an important check point of normal cell cycle regulation. Targets transcription factors involved in the regulation of inflammatory responses and in the immune response: suppresses TNF-induced NF-kappa-B activation, and activates AP-1. Binds to dendritic cells (DCs) via C1QR1, resulting in down-regulation of T-lymphocytes proliferation. Alters lipid metabolism by interacting with hepatocellular proteins involved in lipid accumulation and storage. Induces up-regulation of FAS promoter activity, and thereby contributes to the increased triglyceride accumulation in hepatocytes (steatosis). In terms of biological role, forms a heterodimer with envelope glycoprotein E2, which mediates virus attachment to the host cell, virion internalization through clathrin-dependent endocytosis and fusion with host membrane. Fusion with the host cell is most likely mediated by both E1 and E2, through conformational rearrangements of the heterodimer required for fusion rather than a classical class II fusion mechanism. E1/E2 heterodimer binds host apolipoproteins such as APOB and APOE thereby forming a lipo-viro-particle (LVP). APOE associated to the LVP allows the initial virus attachment to cell surface receptors such as the heparan sulfate proteoglycans (HSPGs), syndecan-1 (SDC1), syndecan-1 (SDC2), the low-density lipoprotein receptor (LDLR) and scavenger receptor class B type I (SCARB1). The cholesterol transfer activity of SCARB1 allows E2 exposure and binding of E2 to SCARB1 and the tetraspanin CD81. E1/E2 heterodimer binding on CD81 activates the epithelial growth factor receptor (EGFR) signaling pathway. Diffusion of the complex E1-E2-EGFR-SCARB1-CD81 to the cell lateral membrane allows further interaction with Claudin 1 (CLDN1) and occludin (OCLN) to finally trigger HCV entry. Forms a heterodimer with envelope glycoprotein E1, which mediates virus attachment to the host cell, virion internalization through clathrin-dependent endocytosis and fusion with host membrane. Fusion with the host cell is most likely mediated by both E1 and E2, through conformational rearrangements of the heterodimer required for fusion rather than a classical class II fusion mechanism. The interaction between envelope glycoprotein E2 and host apolipoprotein E/APOE allows the proper assembly, maturation and infectivity of the viral particles. This interaction is probably promoted via the up-regulation of cellular autophagy by the virus. E1/E2 heterodimer binds host apolipoproteins such as APOB and APOE thereby forming a lipo-viro-particle (LVP). APOE associated to the LVP allows the initial virus attachment to cell surface receptors such as the heparan sulfate proteoglycans (HSPGs), syndecan-1 (SDC1), syndecan-1 (SDC2), the low-density lipoprotein receptor (LDLR) and scavenger receptor class B type I (SCARB1). The cholesterol transfer activity of SCARB1 allows E2 exposure and binding of E2 to SCARB1 and the tetraspanin CD81. E1/E2 heterodimer binding on CD81 activates the epithelial growth factor receptor (EGFR) signaling pathway. Diffusion of the complex E1-E2-EGFR-SCARB1-CD81 to the cell lateral membrane allows further interaction with Claudin 1 (CLDN1) and occludin (OCLN) to finally trigger HCV entry. Inhibits host EIF2AK2/PKR activation, preventing the establishment of an antiviral state. Viral ligand for CD209/DC-SIGN and CLEC4M/DC-SIGNR, which are respectively found on dendritic cells (DCs), and on liver sinusoidal endothelial cells and macrophage-like cells of lymph node sinuses. These interactions allow the capture of circulating HCV particles by these cells and subsequent facilitated transmission to permissive cells such as hepatocytes and lymphocyte subpopulations. The interaction between E2 and host amino acid transporter complex formed by SLC3A2 and SLC7A5/LAT1 may facilitate viral entry into host cell. Functionally, ion channel protein that acts as a viroporin and plays an essential role in the assembly, envelopment and secretion of viral particles. Regulates the host cell secretory pathway, which induces the intracellular retention of viral glycoproteins and favors assembly of viral particles. Creates a pore in acidic organelles and releases Ca(2+) and H(+) in the cytoplasm of infected cells, leading to a productive viral infection. High levels of cytoplasmic Ca(2+) may trigger membrane trafficking and transport of viral ER-associated proteins to viroplasms, sites of viral genome replication. This ionic imbalance induces the assembly of the inflammasome complex, which triggers the maturation of pro-IL-1beta into IL-1beta through the action of caspase-1. Targets also host mitochondria and induces mitochondrial depolarization. In addition of its role as a viroporin, acts as a lipid raft adhesion factor. Its function is as follows. Cysteine protease required for the proteolytic auto-cleavage between the non-structural proteins NS2 and NS3. The N-terminus of NS3 is required for the function of NS2 protease (active region NS2-3). Promotes the initiation of viral particle assembly by mediating the interaction between structural and non-structural proteins. In terms of biological role, displays three enzymatic activities: serine protease with a chymotrypsin-like fold, NTPase and RNA helicase. NS3 serine protease, in association with NS4A, is responsible for the cleavages of NS3-NS4A, NS4A-NS4B, NS4B-NS5A and NS5A-NS5B. The NS3/NS4A complex prevents phosphorylation of host IRF3, thus preventing the establishment of dsRNA induced antiviral state. The NS3/NS4A complex induces host amino acid transporter component SLC3A2, thus contributing to HCV propagation. NS3 RNA helicase binds to RNA and unwinds both dsDNA and dsRNA in the 3' to 5' direction, and likely resolves RNA complicated stable secondary structures in the template strand. Binds a single ATP and catalyzes the unzipping of a single base pair of dsRNA. Inhibits host antiviral proteins TBK1 and IRF3 thereby preventing the establishment of an antiviral state. Cleaves host MAVS/CARDIF thereby preventing the establishment of an antiviral state. Cleaves host TICAM1/TRIF, thereby disrupting TLR3 signaling and preventing the establishment of an antiviral state. Induces a specific membrane alteration that serves as a scaffold for the virus replication complex. This membrane alteration gives rise to the so-called ER-derived membranous web that contains the replication complex. NS4B self-interaction contributes to its function in membranous web formation. Promotes host TRIF protein degradation in a CASP8-dependent manner thereby inhibiting host TLR3-mediated interferon signaling. Disrupts the interaction between STING and TBK1 contributing to the inhibition of interferon signaling. Functionally, phosphorylated protein that is indispensable for viral replication and assembly. Both hypo- and hyperphosphorylated states are required for the viral life cycle. The hyperphosphorylated form of NS5A is an inhibitor of viral replication. Involved in RNA-binding and especially in binding to the viral genome. Zinc is essential for RNA-binding. Participates in the viral particle production as a result of its interaction with the mature viral core protein. Its interaction with host VAPB may target the viral replication complex to vesicles. Down-regulates viral IRES translation initiation. Mediates interferon resistance, presumably by interacting with and inhibiting host EIF2AK2/PKR. Prevents BIN1-induced apoptosis. Acts as a transcriptional activator of some host genes important for viral replication when localized in the nucleus. Via the interaction with host PACSIN2, modulates lipid droplet formation in order to promote virion assembly. Modulates TNFRSF21/DR6 signaling pathway for viral propagation. Its function is as follows. RNA-dependent RNA polymerase that performs primer-template recognition and RNA synthesis during viral replication. Initiates RNA transcription/replication at a flavin adenine dinucleotide (FAD), resulting in a 5'- FAD cap on viral RNAs. In this way, recognition of viral 5' RNA by host pattern recognition receptors can be bypassed, thereby evading activation of antiviral pathways. This is Genome polyprotein from Homo sapiens (Human).